A 266-amino-acid chain; its full sequence is Putative carbamate hydrolase RutD (266 aa).

An AB hydrolase-1 domain is found at 15 to 128 (AVLLSSGLGG…NAHSARCFDA (114 aa)).

This sequence belongs to the AB hydrolase superfamily. Hydrolase RutD family.

The enzyme catalyses carbamate + 2 H(+) = NH4(+) + CO2. Functionally, involved in pyrimidine catabolism. May facilitate the hydrolysis of carbamate, a reaction that can also occur spontaneously. This is Putative carbamate hydrolase RutD from Variovorax paradoxus (strain S110).